A 128-amino-acid chain; its full sequence is Type III secretion protein HrcQb (128 aa).

A compositionally biased stretch (acidic residues) spans 1-21 (MSTEDLYQEDVEMLDDYEDPS). Positions 1–57 (MSTEDLYQEDVEMLDDYEDPSTEQHWSEEDGEPSGYATAEPDDHAAQEEQDEPPALD) are disordered. Residues 50–128 (QDEPPALDSL…LQITRLVTRS (79 aa)) form a hrcQb-C region. The segment at 78 to 81 (RRLD) is dimer-dimer interface.

Belongs to the FliN/MopA/SpaO family. As to quaternary structure, homotetramer. The four monomers assemble into two tightly bound homodimers. Interacts with HrcQa.

Its subcellular location is the cytoplasm. Functionally, component of the type III secretion system, which is required for effector protein delivery, parasitism, and pathogenicity. Probably participates in the formation of a C-ring-like assembly along with HrcQa. The protein is Type III secretion protein HrcQb (hrcQb) of Pseudomonas savastanoi pv. phaseolicola (Pseudomonas syringae pv. phaseolicola).